A 149-amino-acid polypeptide reads, in one-letter code: Cytochrome c-type biogenesis protein CcmE (149 aa).

Residues 1–7 (MKPRHKK) lie on the Cytoplasmic side of the membrane. Residues 8–28 (MAVIALSVSALTVAVVLVLNA) form a helical; Signal-anchor for type II membrane protein membrane-spanning segment. The Periplasmic segment spans residues 29 to 149 (FQSNLVFFFS…AKAQKTSLAQ (121 aa)). Heme is bound by residues His123 and Tyr127.

The protein belongs to the CcmE/CycJ family.

Its subcellular location is the cell inner membrane. Heme chaperone required for the biogenesis of c-type cytochromes. Transiently binds heme delivered by CcmC and transfers the heme to apo-cytochromes in a process facilitated by CcmF and CcmH. The chain is Cytochrome c-type biogenesis protein CcmE from Nitrosomonas europaea (strain ATCC 19718 / CIP 103999 / KCTC 2705 / NBRC 14298).